Consider the following 60-residue polypeptide: Kunitz-type serine protease inhibitor homolog dendrotoxin I (60 aa).

The 51-residue stretch at 7–57 folds into the BPTI/Kunitz inhibitor domain; sequence CILHRNPGRCYQKIPAFYYNQKKKQCEGFTWSGCGGNSNRFKTIEECRRTC. 3 cysteine pairs are disulfide-bonded: C7-C57, C16-C40, and C32-C53.

This sequence belongs to the venom Kunitz-type family. In terms of tissue distribution, expressed by the venom gland.

The protein resides in the secreted. Serine protease inhibitor homolog that blocks voltage-gated potassium channels (Kv1.1/KCNA1, Kv1.2/KCNA2, and Kv1.6/KCNA6) (IC(50)=0.13-50 nM). This chain is Kunitz-type serine protease inhibitor homolog dendrotoxin I, found in Dendroaspis polylepis polylepis (Black mamba).